A 152-amino-acid chain; its full sequence is 6,7-dimethyl-8-ribityllumazine synthase (152 aa).

Residues Phe22, 56 to 58 (AFE), and 79 to 81 (AVI) contribute to the 5-amino-6-(D-ribitylamino)uracil site. A (2S)-2-hydroxy-3-oxobutyl phosphate-binding site is contributed by 84–85 (AT). Catalysis depends on His87, which acts as the Proton donor. Phe112 lines the 5-amino-6-(D-ribitylamino)uracil pocket. Arg126 contacts (2S)-2-hydroxy-3-oxobutyl phosphate.

Belongs to the DMRL synthase family.

It catalyses the reaction (2S)-2-hydroxy-3-oxobutyl phosphate + 5-amino-6-(D-ribitylamino)uracil = 6,7-dimethyl-8-(1-D-ribityl)lumazine + phosphate + 2 H2O + H(+). It functions in the pathway cofactor biosynthesis; riboflavin biosynthesis; riboflavin from 2-hydroxy-3-oxobutyl phosphate and 5-amino-6-(D-ribitylamino)uracil: step 1/2. Catalyzes the formation of 6,7-dimethyl-8-ribityllumazine by condensation of 5-amino-6-(D-ribitylamino)uracil with 3,4-dihydroxy-2-butanone 4-phosphate. This is the penultimate step in the biosynthesis of riboflavin. In Carboxydothermus hydrogenoformans (strain ATCC BAA-161 / DSM 6008 / Z-2901), this protein is 6,7-dimethyl-8-ribityllumazine synthase.